The following is a 110-amino-acid chain: UPF0060 membrane protein Mmwyl1_1139 (110 aa).

4 helical membrane passes run 7–27 (ISLF…PYLW), 33–53 (TIWL…LLTL), 63–83 (AAYG…VDGI), and 87–107 (TWDM…MFAP).

The protein belongs to the UPF0060 family.

The protein resides in the cell inner membrane. In Marinomonas sp. (strain MWYL1), this protein is UPF0060 membrane protein Mmwyl1_1139.